The sequence spans 394 residues: Exodeoxyribonuclease 7 large subunit (394 aa).

It belongs to the XseA family. Heterooligomer composed of large and small subunits.

The protein localises to the cytoplasm. It carries out the reaction Exonucleolytic cleavage in either 5'- to 3'- or 3'- to 5'-direction to yield nucleoside 5'-phosphates.. Its function is as follows. Bidirectionally degrades single-stranded DNA into large acid-insoluble oligonucleotides, which are then degraded further into small acid-soluble oligonucleotides. The sequence is that of Exodeoxyribonuclease 7 large subunit from Thermotoga maritima (strain ATCC 43589 / DSM 3109 / JCM 10099 / NBRC 100826 / MSB8).